The following is a 329-amino-acid chain: Gibberellin 2-beta-dioxygenase 1 (329 aa).

The Fe2OG dioxygenase domain occupies 165-273; sequence NTDSILRLNH…RVSMIYFAGP (109 aa). Residues histidine 197, aspartate 199, and histidine 254 each contribute to the Fe cation site. Arginine 264 is an active-site residue. A 2-oxoglutarate-binding site is contributed by arginine 264.

The protein belongs to the iron/ascorbate-dependent oxidoreductase family. GA2OX subfamily. Fe(2+) is required as a cofactor. In terms of tissue distribution, preferentially expressed in flowers, siliques, and upper stems. Not expressed in the apex.

The catalysed reaction is gibberellin A1 + 2-oxoglutarate + O2 = gibberellin A8 + succinate + CO2. It participates in plant hormone biosynthesis; gibberellin biosynthesis. Its function is as follows. Catalyzes the 2-beta-hydroxylation of several biologically active gibberellins, leading to the homeostatic regulation of their endogenous level. Catabolism of gibberellins (GAs) plays a central role in plant development. Converts GA9/GA20 to GA51/GA29 and GA4/GA1 to GA34/GA8. This is Gibberellin 2-beta-dioxygenase 1 (GA2OX1) from Arabidopsis thaliana (Mouse-ear cress).